Here is a 60-residue protein sequence, read N- to C-terminus: Cytotoxin 3 (60 aa).

Intrachain disulfides connect Cys3/Cys21, Cys14/Cys38, Cys42/Cys53, and Cys54/Cys59.

This sequence belongs to the three-finger toxin family. Short-chain subfamily. Type IA cytotoxin sub-subfamily. As to quaternary structure, monomer in solution; Homodimer and oligomer in the presence of negatively charged lipids forming a pore with a size ranging between 20 and 30 Angstroms. As to expression, expressed by the venom gland.

The protein resides in the secreted. The protein localises to the target cell membrane. Functionally, shows cytolytic activity on many different cells by forming pore in lipid membranes. In vivo, increases heart rate or kills the animal by cardiac arrest. In addition, it binds to heparin with high affinity, interacts with Kv channel-interacting protein 1 (KCNIP1) in a calcium-independent manner, and binds to integrin alpha-V/beta-3 (ITGAV/ITGB3) with moderate affinity. The chain is Cytotoxin 3 from Naja mossambica (Mozambique spitting cobra).